We begin with the raw amino-acid sequence, 294 residues long: Nucleotide-binding protein CPF_0343 (294 aa).

Glycine 8–threonine 15 contributes to the ATP binding site. Position 59 to 62 (aspartate 59 to glycine 62) interacts with GTP.

This sequence belongs to the RapZ-like family.

In terms of biological role, displays ATPase and GTPase activities. The polypeptide is Nucleotide-binding protein CPF_0343 (Clostridium perfringens (strain ATCC 13124 / DSM 756 / JCM 1290 / NCIMB 6125 / NCTC 8237 / Type A)).